Consider the following 392-residue polypeptide: Na(+)/H(+) antiporter NhaA 2 (392 aa).

A run of 11 helical transmembrane segments spans residues 20–40 (FFAAEAAGGLILMAAALAALI), 63–83 (VEHWINDGLMAIFFMLVGLEI), 99–119 (ALPGFAALGGMVVPALIYVAF), 127–147 (IGGWAIPAATDIAFALGVLSL), 158–178 (IFLSALAILDDLGAVLIIALF), 181–201 (SDLSIPMLLAALGSIAVLVAL), 209–229 (LLPYLIVGALLWFFMLQSGIH), 265–285 (VAFAVVPVFGFANAGVSLSGI), 298–318 (VALGLLIGKQVGIFALAALAI), 336–356 (GVAALCGIGFTMSLFIGALAF), and 365–385 (EVKVGVLIGSVLSALLGVVVL).

Belongs to the NhaA Na(+)/H(+) (TC 2.A.33) antiporter family.

It localises to the cell inner membrane. It catalyses the reaction Na(+)(in) + 2 H(+)(out) = Na(+)(out) + 2 H(+)(in). Functionally, na(+)/H(+) antiporter that extrudes sodium in exchange for external protons. In Pseudomonas savastanoi pv. phaseolicola (strain 1448A / Race 6) (Pseudomonas syringae pv. phaseolicola (strain 1448A / Race 6)), this protein is Na(+)/H(+) antiporter NhaA 2.